The sequence spans 120 residues: 5-hydroxyisourate hydrolase 2 (120 aa).

Substrate-binding residues include His-10, Arg-48, and Tyr-117.

This sequence belongs to the transthyretin family. 5-hydroxyisourate hydrolase subfamily. Homotetramer.

The catalysed reaction is 5-hydroxyisourate + H2O = 5-hydroxy-2-oxo-4-ureido-2,5-dihydro-1H-imidazole-5-carboxylate + H(+). Its function is as follows. Catalyzes the hydrolysis of 5-hydroxyisourate (HIU) to 2-oxo-4-hydroxy-4-carboxy-5-ureidoimidazoline (OHCU). The chain is 5-hydroxyisourate hydrolase 2 from Rhizobium meliloti (strain 1021) (Ensifer meliloti).